The following is a 1134-amino-acid chain: Myosin-4 (1134 aa).

The 51-residue stretch at 110–160 (REKLCVWCRVAANGQWHLGKIHSTSSSDDVCVMLSANDDVRTMEEIFPANP) folds into the Myosin N-terminal SH3-like domain. The Myosin motor domain maps to 164–830 (EGVEDLTQLS…VISVLEERKK (667 aa)). ATP is bound by residues 255–262 (GESGAGKT) and 304–312 (NDNSSRFGK). 2 actin-binding regions span residues 589-623 (LIEK…KQHL) and 710-732 (LFKL…KPNS). IQ domains lie at 832 to 861 (VLRG…AAVI), 855 to 884 (MRNA…SAIV), and 891 to 920 (ELDA…KNKP). Residues 913 to 939 (STQQKNKPRNEKKKTRRKSTKRVSEDK) form a disordered region. Basic residues predominate over residues 918-933 (NKPRNEKKKTRRKSTK). Positions 953–999 (LADLQSRVLKVEAAIMQKEDENTALQEELQRFEERWLENETRMKSME) form a coiled coil.

It belongs to the TRAFAC class myosin-kinesin ATPase superfamily. Myosin family. Plant myosin class VIII subfamily. In terms of assembly, homodimer.

Its function is as follows. Myosin heavy chain that is required for the cell cycle-regulated transport of various organelles and proteins for their segregation. Functions by binding with its tail domain to receptor proteins on organelles and exerting force with its N-terminal motor domain against actin filaments, thereby transporting its cargo along polarized actin cables. This chain is Myosin-4 (VIII-B), found in Arabidopsis thaliana (Mouse-ear cress).